We begin with the raw amino-acid sequence, 465 residues long: Kynureninase (465 aa).

Residues leucine 116, threonine 117, 144–147 (FPSD), aspartate 231, histidine 234, and tyrosine 256 each bind pyridoxal 5'-phosphate. Lysine 257 bears the N6-(pyridoxal phosphate)lysine mark. Pyridoxal 5'-phosphate is bound by residues tryptophan 291 and asparagine 319.

It belongs to the kynureninase family. In terms of assembly, homodimer. Pyridoxal 5'-phosphate is required as a cofactor.

The protein resides in the cytoplasm. The catalysed reaction is L-kynurenine + H2O = anthranilate + L-alanine + H(+). The enzyme catalyses 3-hydroxy-L-kynurenine + H2O = 3-hydroxyanthranilate + L-alanine + H(+). It participates in amino-acid degradation; L-kynurenine degradation; L-alanine and anthranilate from L-kynurenine: step 1/1. Its pathway is cofactor biosynthesis; NAD(+) biosynthesis; quinolinate from L-kynurenine: step 2/3. Catalyzes the cleavage of L-kynurenine (L-Kyn) and L-3-hydroxykynurenine (L-3OHKyn) into anthranilic acid (AA) and 3-hydroxyanthranilic acid (3-OHAA), respectively. In Scheffersomyces stipitis (strain ATCC 58785 / CBS 6054 / NBRC 10063 / NRRL Y-11545) (Yeast), this protein is Kynureninase.